A 478-amino-acid chain; its full sequence is Dynein regulatory complex subunit 4 (478 aa).

The span at 1–12 (MAPKKKGKKGKA) shows a compositional bias: basic residues. Positions 1-33 (MAPKKKGKKGKAKGTPIVDGLAPEDMSKEQVEE) are disordered. The interval 1-114 (MAPKKKGKKG…LLYEHQNNLT (114 aa)) is regulates microtubule-binding. Residues 115–258 (EMKAEGTVVM…NSLKEQMEDM (144 aa)) are microtubule-binding. Positions 242–427 (LNNLALINSL…KDLQYELAQV (186 aa)) form a coiled coil. Residues 357–478 (QQKTGFKNLV…GPAGLVGTPT (122 aa)) form an interaction with SMO region.

This sequence belongs to the DRC4 family. Component of the nexin-dynein regulatory complex (N-DRC). Interacts with microtubules. Interacts with SMO. Interacts (via coiled-coil domains) with RAB3B (in GTP-bound form). Interacts with DRC1. Interacts with DRC7. As to expression, expressed in respiratory epithelial cells (at protein level). Expressed in the heart, skeletal muscle, pancreas, liver, brain, trachea and lung. Weakly or not expressed in placenta and kidney.

The protein localises to the cytoplasm. The protein resides in the cytoskeleton. It localises to the cell projection. It is found in the cilium. Its subcellular location is the flagellum. The protein localises to the cilium axoneme. The protein resides in the cilium basal body. It localises to the golgi apparatus. It is found in the flagellum axoneme. In terms of biological role, component of the nexin-dynein regulatory complex (N-DRC), a key regulator of ciliary/flagellar motility which maintains the alignment and integrity of the distal axoneme and regulates microtubule sliding in motile axonemes. Plays an important role in the assembly of the N-DRC linker. Plays dual roles at both the primary (or non-motile) cilia to regulate hedgehog signaling and in motile cilia to coordinate cilia movement. Required for proper motile cilia functioning. Positively regulates ciliary smoothened (SMO)-dependent Hedgehog (Hh) signaling pathway by facilitating the trafficking of SMO into the cilium and the stimulation of SMO activity in a GRK2-dependent manner. The chain is Dynein regulatory complex subunit 4 (GAS8) from Homo sapiens (Human).